The sequence spans 193 residues: dCTP deaminase (193 aa).

Residues 110 to 115 (RSSLAR), Asp-128, 136 to 138 (VLE), Tyr-171, Lys-178, and Gln-182 contribute to the dCTP site. Glu-138 acts as the Proton donor/acceptor in catalysis. The disordered stretch occupies residues 169–193 (RPYNSRQDAKYKGQQGAVASRIDKD).

The protein belongs to the dCTP deaminase family. In terms of assembly, homotrimer.

It carries out the reaction dCTP + H2O + H(+) = dUTP + NH4(+). The protein operates within pyrimidine metabolism; dUMP biosynthesis; dUMP from dCTP (dUTP route): step 1/2. Its function is as follows. Catalyzes the deamination of dCTP to dUTP. The sequence is that of dCTP deaminase from Erwinia tasmaniensis (strain DSM 17950 / CFBP 7177 / CIP 109463 / NCPPB 4357 / Et1/99).